We begin with the raw amino-acid sequence, 417 residues long: UDP-N-acetylglucosamine 1-carboxyvinyltransferase (417 aa).

22–23 (KN) contacts phosphoenolpyruvate. A UDP-N-acetyl-alpha-D-glucosamine-binding site is contributed by arginine 93. Residue cysteine 117 is the Proton donor of the active site. Cysteine 117 carries the post-translational modification 2-(S-cysteinyl)pyruvic acid O-phosphothioketal. UDP-N-acetyl-alpha-D-glucosamine contacts are provided by residues 122–126 (RPVDQ), aspartate 305, and isoleucine 327.

Belongs to the EPSP synthase family. MurA subfamily.

The protein localises to the cytoplasm. The catalysed reaction is phosphoenolpyruvate + UDP-N-acetyl-alpha-D-glucosamine = UDP-N-acetyl-3-O-(1-carboxyvinyl)-alpha-D-glucosamine + phosphate. The protein operates within cell wall biogenesis; peptidoglycan biosynthesis. Functionally, cell wall formation. Adds enolpyruvyl to UDP-N-acetylglucosamine. In Nitrosomonas europaea (strain ATCC 19718 / CIP 103999 / KCTC 2705 / NBRC 14298), this protein is UDP-N-acetylglucosamine 1-carboxyvinyltransferase.